Reading from the N-terminus, the 395-residue chain is Phosphoserine aminotransferase (395 aa).

Threonine 20 is modified (phosphothreonine). 80 to 81 (GT) is a binding site for pyridoxal 5'-phosphate. Phosphoserine is present on serine 112. Pyridoxal 5'-phosphate is bound by residues tryptophan 113, threonine 170, aspartate 194, and glutamine 217. Residue lysine 218 is modified to N6-(pyridoxal phosphate)lysine. 271 to 272 (NT) contacts pyridoxal 5'-phosphate.

It belongs to the class-V pyridoxal-phosphate-dependent aminotransferase family. SerC subfamily. As to quaternary structure, homodimer. The cofactor is pyridoxal 5'-phosphate.

It catalyses the reaction O-phospho-L-serine + 2-oxoglutarate = 3-phosphooxypyruvate + L-glutamate. The enzyme catalyses 4-(phosphooxy)-L-threonine + 2-oxoglutarate = (R)-3-hydroxy-2-oxo-4-phosphooxybutanoate + L-glutamate. Its pathway is amino-acid biosynthesis; L-serine biosynthesis; L-serine from 3-phospho-D-glycerate: step 2/3. In terms of biological role, phosphoserine aminotransferase (PSAT) is a pyridoxal 5'-phosphate-dependent enzyme involved in the second step of the phosphorylated pathway of serine biosynthesis. Catalyzes the reversible conversion of 3-phosphohydroxypyruvate to phosphoserine and of 3-hydroxy-2-oxo-4-phosphonooxybutanoate to phosphohydroxythreonine. Plays an indirect role in purine biosynthesis. The sequence is that of Phosphoserine aminotransferase from Saccharomyces cerevisiae (strain ATCC 204508 / S288c) (Baker's yeast).